A 320-amino-acid polypeptide reads, in one-letter code: Mas-related G-protein coupled receptor member D (320 aa).

The Extracellular portion of the chain corresponds to 1–33 (MNQTLNSSGTAELALNHSRGSVVHAACLVLSSL). N-linked (GlcNAc...) asparagine glycans are attached at residues N2, N6, and N16. Residues 34 to 54 (AMFTCLCGMAGNSMVIWLLGF) traverse the membrane as a helical segment. At 55 to 62 (RMRRTPFS) the chain is on the cytoplasmic side. Residues 63 to 83 (IYILNLAAADLLFVFCMAAML) form a helical membrane-spanning segment. Residues 84-112 (SLETQPLVSTTDKVHELMKRLKYFAYTVG) are Extracellular-facing. The helical transmembrane segment at 113 to 133 (LSLLTAISTQRCLSVLFPIWF) threads the bilayer. Residues 134–142 (KCHRPRHLS) lie on the Cytoplasmic side of the membrane. A helical membrane pass occupies residues 143-163 (AWVCALLWMLCLLTNGLTSCF). At 164-182 (CSKFLKFNKDQCFRVDMVQ) the chain is on the extracellular side. A helical membrane pass occupies residues 183–203 (AALIMGVLTPVMTLSSLTLFV). Over 204 to 218 (RVRRSSQQWRRQPTR) the chain is Cytoplasmic. Residues 219–239 (LFVVVLASVLVFLICSLPLGF) form a helical membrane-spanning segment. Residues 240–257 (YWFVLYWLNLPPDTKVLY) are Extracellular-facing. Residues 258–280 (FNLSRLSSSMSSSANPLIYFLVG) traverse the membrane as a helical segment. The Cytoplasmic portion of the chain corresponds to 281–320 (SRRSRRLQGSLGTVLQRALREEPELEGGETPTTGTNEMGA). The tract at residues 301–320 (EEPELEGGETPTTGTNEMGA) is disordered. The span at 308–320 (GETPTTGTNEMGA) shows a compositional bias: low complexity.

It belongs to the G-protein coupled receptor 1 family. Mas subfamily. Co-expressed in the small diameter neurons with P2X3 and VR1 in dorsal root ganglia.

It localises to the cell membrane. In terms of biological role, may regulate nociceptor function and/or development, including the sensation or modulation of pain. Functions as a specific membrane receptor for beta-alanine. The receptor couples with G-protein G(q) and G(i). The protein is Mas-related G-protein coupled receptor member D (MRGPRD) of Macaca fascicularis (Crab-eating macaque).